Reading from the N-terminus, the 217-residue chain is Thiopurine S-methyltransferase (217 aa).

S-adenosyl-L-methionine-binding residues include W11, L46, E67, and R122.

Belongs to the class I-like SAM-binding methyltransferase superfamily. TPMT family.

Its subcellular location is the cytoplasm. The enzyme catalyses S-adenosyl-L-methionine + a thiopurine = S-adenosyl-L-homocysteine + a thiopurine S-methylether.. This is Thiopurine S-methyltransferase from Vibrio atlanticus (strain LGP32) (Vibrio splendidus (strain Mel32)).